We begin with the raw amino-acid sequence, 291 residues long: Alpha-soluble NSF attachment protein (291 aa).

4 TPR repeats span residues 14–51 (ADKR…FKMS), 77–110 (AASS…YTDE), 117–150 (AKHQ…FDGE), and 157–190 (HQCL…SLDN).

Belongs to the SNAP family. In terms of assembly, interacts with nsfA and probably SNARE proteins.

The protein localises to the cytoplasmic vesicle membrane. Its function is as follows. May be required for vesicular transport between the endoplasmic reticulum and the Golgi apparatus. Involved in vesicle fusion with nsfA and probably SNARE proteins. The chain is Alpha-soluble NSF attachment protein (snpA) from Dictyostelium discoideum (Social amoeba).